We begin with the raw amino-acid sequence, 142 residues long: Large ribosomal subunit protein uL11 (142 aa).

The protein belongs to the universal ribosomal protein uL11 family. In terms of assembly, part of the ribosomal stalk of the 50S ribosomal subunit. Interacts with L10 and the large rRNA to form the base of the stalk. L10 forms an elongated spine to which L12 dimers bind in a sequential fashion forming a multimeric L10(L12)X complex. One or more lysine residues are methylated.

Its function is as follows. Forms part of the ribosomal stalk which helps the ribosome interact with GTP-bound translation factors. This Enterobacter sp. (strain 638) protein is Large ribosomal subunit protein uL11.